The following is a 267-amino-acid chain: Small ribosomal subunit protein uS2 (267 aa).

Positions 224-244 are disordered; the sequence is GRQGEDEDVTEDSFKDNKDAK. Over residues 235–244 the composition is skewed to basic and acidic residues; the sequence is DSFKDNKDAK.

The protein belongs to the universal ribosomal protein uS2 family.

The protein is Small ribosomal subunit protein uS2 of Lactiplantibacillus plantarum (strain ATCC BAA-793 / NCIMB 8826 / WCFS1) (Lactobacillus plantarum).